Reading from the N-terminus, the 103-residue chain is Urease subunit beta (103 aa).

This sequence belongs to the urease beta subunit family. In terms of assembly, heterotrimer of UreA (gamma), UreB (beta) and UreC (alpha) subunits. Three heterotrimers associate to form the active enzyme.

It is found in the cytoplasm. It carries out the reaction urea + 2 H2O + H(+) = hydrogencarbonate + 2 NH4(+). It functions in the pathway nitrogen metabolism; urea degradation; CO(2) and NH(3) from urea (urease route): step 1/1. In Mycobacterium marinum (strain ATCC BAA-535 / M), this protein is Urease subunit beta.